The primary structure comprises 447 residues: Alpha-1,3-mannosyl-glycoprotein 2-beta-N-acetylglucosaminyltransferase (447 aa).

The Cytoplasmic segment spans residues 1 to 6; sequence MLKKQS. A helical; Signal-anchor for type II membrane protein membrane pass occupies residues 7–29; it reads AGLVLWGAILFVAWNALLLLFFW. Residues 30–447 are Lumenal-facing; that stretch reads TRPVPSRLPS…TWDGYDPSWT (418 aa). A disulfide bridge connects residues Cys115 and Cys145. Arg117, Asp144, His190, and Asp212 together coordinate substrate. Residue Asp213 participates in Mn(2+) binding. Cys239 and Cys305 form a disulfide bridge. Asp291 (proton acceptor) is an active-site residue. Ser322 serves as a coordination point for substrate.

It belongs to the glycosyltransferase 13 family. As to quaternary structure, interacts with MGAT4D. Interacts with BRI3. It depends on Mn(2+) as a cofactor.

The protein resides in the golgi apparatus membrane. Its subcellular location is the cytoplasm. It is found in the perinuclear region. It catalyses the reaction N(4)-(alpha-D-Man-(1-&gt;3)-[alpha-D-Man-(1-&gt;3)-[alpha-D-Man-(1-&gt;6)]-alpha-D-Man-(1-&gt;6)]-beta-D-Man-(1-&gt;4)-beta-D-GlcNAc-(1-&gt;4)-beta-D-GlcNAc)-L-asparaginyl-[protein] (N-glucan mannose isomer 5A1,2) + UDP-N-acetyl-alpha-D-glucosamine = N(4)-{beta-D-GlcNAc-(1-&gt;2)-alpha-D-Man-(1-&gt;3)-[alpha-D-Man-(1-&gt;3)-[alpha-D-Man-(1-&gt;6)]-alpha-D-Man-(1-&gt;6)]-beta-D-Man-(1-&gt;4)-beta-D-GlcNAc-(1-&gt;4)-beta-D-GlcNAc}-L-asparaginyl-[protein] + UDP + H(+). It functions in the pathway protein modification; protein glycosylation. Its function is as follows. Initiates complex N-linked carbohydrate formation. Essential for the conversion of high-mannose to hybrid and complex N-glycans. The polypeptide is Alpha-1,3-mannosyl-glycoprotein 2-beta-N-acetylglucosaminyltransferase (MGAT1) (Oryctolagus cuniculus (Rabbit)).